A 513-amino-acid chain; its full sequence is 2-isopropylmalate synthase (513 aa).

The region spanning 7–269 (VYIFDTTLRD…TTGIVTEELF (263 aa)) is the Pyruvate carboxyltransferase domain. Positions 16, 204, 206, and 240 each coordinate Mn(2+). The tract at residues 393-513 (ALQFLSVHCG…KEEERTCPQL (121 aa)) is regulatory domain.

It belongs to the alpha-IPM synthase/homocitrate synthase family. LeuA type 1 subfamily. In terms of assembly, homodimer. It depends on Mn(2+) as a cofactor.

It is found in the cytoplasm. It carries out the reaction 3-methyl-2-oxobutanoate + acetyl-CoA + H2O = (2S)-2-isopropylmalate + CoA + H(+). The protein operates within amino-acid biosynthesis; L-leucine biosynthesis; L-leucine from 3-methyl-2-oxobutanoate: step 1/4. In terms of biological role, catalyzes the condensation of the acetyl group of acetyl-CoA with 3-methyl-2-oxobutanoate (2-ketoisovalerate) to form 3-carboxy-3-hydroxy-4-methylpentanoate (2-isopropylmalate). This is 2-isopropylmalate synthase from Solidesulfovibrio magneticus (strain ATCC 700980 / DSM 13731 / RS-1) (Desulfovibrio magneticus).